The sequence spans 363 residues: UDP-N-acetylglucosamine--N-acetylmuramyl-(pentapeptide) pyrophosphoryl-undecaprenol N-acetylglucosamine transferase (363 aa).

Residues 10–12 (TGG), asparagine 124, serine 195, isoleucine 250, and glutamine 295 each bind UDP-N-acetyl-alpha-D-glucosamine.

The protein belongs to the glycosyltransferase 28 family. MurG subfamily.

It localises to the cell membrane. It catalyses the reaction di-trans,octa-cis-undecaprenyl diphospho-N-acetyl-alpha-D-muramoyl-L-alanyl-D-glutamyl-meso-2,6-diaminopimeloyl-D-alanyl-D-alanine + UDP-N-acetyl-alpha-D-glucosamine = di-trans,octa-cis-undecaprenyl diphospho-[N-acetyl-alpha-D-glucosaminyl-(1-&gt;4)]-N-acetyl-alpha-D-muramoyl-L-alanyl-D-glutamyl-meso-2,6-diaminopimeloyl-D-alanyl-D-alanine + UDP + H(+). Its pathway is cell wall biogenesis; peptidoglycan biosynthesis. Functionally, cell wall formation. Catalyzes the transfer of a GlcNAc subunit on undecaprenyl-pyrophosphoryl-MurNAc-pentapeptide (lipid intermediate I) to form undecaprenyl-pyrophosphoryl-MurNAc-(pentapeptide)GlcNAc (lipid intermediate II). This chain is UDP-N-acetylglucosamine--N-acetylmuramyl-(pentapeptide) pyrophosphoryl-undecaprenol N-acetylglucosamine transferase, found in Listeria monocytogenes serotype 4b (strain CLIP80459).